The primary structure comprises 1486 residues: Chromosome partition protein MukB (1486 aa).

An ATP-binding site is contributed by 34–41 (GGNGAGKS). Coiled coils occupy residues 326–418 (LEAD…QYNQ), 444–480 (LETF…QAYQ), and 509–603 (RHLA…RAPV). The segment at 666-783 (PGGSEDQRLN…EVPLFGRAAR (118 aa)) is flexible hinge. Coiled coils occupy residues 835–923 (EAEI…AKLE), 977–1115 (EMLS…TAKA), and 1209–1266 (VEAI…QNVS).

Belongs to the SMC family. MukB subfamily. In terms of assembly, homodimerization via its hinge domain. Binds to DNA via its C-terminal region. Interacts, and probably forms a ternary complex, with MukE and MukF via its C-terminal region. The complex formation is stimulated by calcium or magnesium. Interacts with tubulin-related protein FtsZ.

It is found in the cytoplasm. The protein resides in the nucleoid. In terms of biological role, plays a central role in chromosome condensation, segregation and cell cycle progression. Functions as a homodimer, which is essential for chromosome partition. Involved in negative DNA supercoiling in vivo, and by this means organize and compact chromosomes. May achieve or facilitate chromosome segregation by condensation DNA from both sides of a centrally located replisome during cell division. The sequence is that of Chromosome partition protein MukB from Escherichia coli O81 (strain ED1a).